The sequence spans 423 residues: Putative competence-damage inducible protein (423 aa).

It belongs to the CinA family.

The sequence is that of Putative competence-damage inducible protein from Streptococcus uberis (strain ATCC BAA-854 / 0140J).